Consider the following 360-residue polypeptide: Alanine racemase (360 aa).

Lys-34 serves as the catalytic Proton acceptor; specific for D-alanine. At Lys-34 the chain carries N6-(pyridoxal phosphate)lysine. Residue Arg-129 participates in substrate binding. Residue Tyr-254 is the Proton acceptor; specific for L-alanine of the active site. Substrate is bound at residue Met-302.

The protein belongs to the alanine racemase family. Pyridoxal 5'-phosphate is required as a cofactor.

It catalyses the reaction L-alanine = D-alanine. It functions in the pathway amino-acid biosynthesis; D-alanine biosynthesis; D-alanine from L-alanine: step 1/1. Catalyzes the interconversion of L-alanine and D-alanine. May also act on other amino acids. The protein is Alanine racemase (alr) of Pectobacterium carotovorum subsp. carotovorum (strain PC1).